Consider the following 451-residue polypeptide: Bifunctional protein GlmU (451 aa).

The segment at 1 to 225 (MSLAVVILAA…EFEIQGVNDR (225 aa)) is pyrophosphorylase. UDP-N-acetyl-alpha-D-glucosamine is bound by residues 8–11 (LAAG), Lys-22, Gln-73, 78–79 (GT), 99–101 (YGD), Gly-135, Glu-150, Asn-165, and Asn-223. Residue Asp-101 participates in Mg(2+) binding. Residue Asn-223 coordinates Mg(2+). Residues 226–246 (IQLAQLEREWQKHIAEVIMSK) are linker. Residues 247 to 451 (GVSVADPSRI…IDTWQRPVKK (205 aa)) are N-acetyltransferase. 2 residues coordinate UDP-N-acetyl-alpha-D-glucosamine: Arg-329 and Lys-347. His-359 functions as the Proton acceptor in the catalytic mechanism. UDP-N-acetyl-alpha-D-glucosamine is bound by residues Tyr-362 and Asn-373. Acetyl-CoA contacts are provided by residues Ala-376, 382–383 (NY), Ser-401, Ala-419, and Arg-436.

In the N-terminal section; belongs to the N-acetylglucosamine-1-phosphate uridyltransferase family. It in the C-terminal section; belongs to the transferase hexapeptide repeat family. As to quaternary structure, homotrimer. Mg(2+) serves as cofactor.

It is found in the cytoplasm. The enzyme catalyses alpha-D-glucosamine 1-phosphate + acetyl-CoA = N-acetyl-alpha-D-glucosamine 1-phosphate + CoA + H(+). It catalyses the reaction N-acetyl-alpha-D-glucosamine 1-phosphate + UTP + H(+) = UDP-N-acetyl-alpha-D-glucosamine + diphosphate. It participates in nucleotide-sugar biosynthesis; UDP-N-acetyl-alpha-D-glucosamine biosynthesis; N-acetyl-alpha-D-glucosamine 1-phosphate from alpha-D-glucosamine 6-phosphate (route II): step 2/2. The protein operates within nucleotide-sugar biosynthesis; UDP-N-acetyl-alpha-D-glucosamine biosynthesis; UDP-N-acetyl-alpha-D-glucosamine from N-acetyl-alpha-D-glucosamine 1-phosphate: step 1/1. It functions in the pathway bacterial outer membrane biogenesis; LPS lipid A biosynthesis. In terms of biological role, catalyzes the last two sequential reactions in the de novo biosynthetic pathway for UDP-N-acetylglucosamine (UDP-GlcNAc). The C-terminal domain catalyzes the transfer of acetyl group from acetyl coenzyme A to glucosamine-1-phosphate (GlcN-1-P) to produce N-acetylglucosamine-1-phosphate (GlcNAc-1-P), which is converted into UDP-GlcNAc by the transfer of uridine 5-monophosphate (from uridine 5-triphosphate), a reaction catalyzed by the N-terminal domain. This Francisella philomiragia subsp. philomiragia (strain ATCC 25017 / CCUG 19701 / FSC 153 / O#319-036) protein is Bifunctional protein GlmU.